Consider the following 517-residue polypeptide: Squalene epoxidase 6 (517 aa).

The next 2 helical transmembrane spans lie at 3–23 (FTHVCLWTLVAFVLTWTVFYL) and 45–65 (AADVIIVGAGVGGSALAYALA). FAD contacts are provided by residues 55-56 (VG), 75-76 (ER), arginine 83, phenylalanine 88, arginine 156, valine 172, aspartate 336, and methionine 349. The helical transmembrane segment at 447-467 (LVYHLCAITLSSIGQLLSPFP) threads the bilayer.

It belongs to the squalene monooxygenase family. FAD is required as a cofactor. In terms of tissue distribution, expressed in seedlings, leaves, stems, inflorescences and siliques.

The protein localises to the membrane. The catalysed reaction is squalene + reduced [NADPH--hemoprotein reductase] + O2 = (S)-2,3-epoxysqualene + oxidized [NADPH--hemoprotein reductase] + H2O + H(+). It participates in terpene metabolism; lanosterol biosynthesis; lanosterol from farnesyl diphosphate: step 2/3. In terms of biological role, catalyzes the stereospecific oxidation of squalene to (S)-2,3-epoxysqualene, and is considered to be a rate-limiting enzyme in steroid biosynthesis. In Arabidopsis thaliana (Mouse-ear cress), this protein is Squalene epoxidase 6 (SQE6).